Consider the following 969-residue polypeptide: Protein translocase subunit SecA (969 aa).

Residues Gln99, 117 to 121 (GEGKT), and Asp631 each bind ATP.

Belongs to the SecA family. As to quaternary structure, monomer and homodimer. Part of the essential Sec protein translocation apparatus which comprises SecA, SecYEG and auxiliary proteins SecDF. Other proteins may also be involved.

Its subcellular location is the cell inner membrane. It is found in the cytoplasm. The enzyme catalyses ATP + H2O + cellular proteinSide 1 = ADP + phosphate + cellular proteinSide 2.. Its function is as follows. Part of the Sec protein translocase complex. Interacts with the SecYEG preprotein conducting channel. Has a central role in coupling the hydrolysis of ATP to the transfer of proteins into and across the cell membrane, serving as an ATP-driven molecular motor driving the stepwise translocation of polypeptide chains across the membrane. The protein is Protein translocase subunit SecA of Chlamydia trachomatis serovar D (strain ATCC VR-885 / DSM 19411 / UW-3/Cx).